Consider the following 437-residue polypeptide: Probable glycine dehydrogenase (decarboxylating) subunit 1 (437 aa).

The protein belongs to the GcvP family. N-terminal subunit subfamily. The glycine cleavage system is composed of four proteins: P, T, L and H. In this organism, the P 'protein' is a heterodimer of two subunits.

The enzyme catalyses N(6)-[(R)-lipoyl]-L-lysyl-[glycine-cleavage complex H protein] + glycine + H(+) = N(6)-[(R)-S(8)-aminomethyldihydrolipoyl]-L-lysyl-[glycine-cleavage complex H protein] + CO2. In terms of biological role, the glycine cleavage system catalyzes the degradation of glycine. The P protein binds the alpha-amino group of glycine through its pyridoxal phosphate cofactor; CO(2) is released and the remaining methylamine moiety is then transferred to the lipoamide cofactor of the H protein. This Thermotoga maritima (strain ATCC 43589 / DSM 3109 / JCM 10099 / NBRC 100826 / MSB8) protein is Probable glycine dehydrogenase (decarboxylating) subunit 1.